Reading from the N-terminus, the 285-residue chain is Ribose-phosphate pyrophosphokinase (285 aa).

Residues 33 to 35 and 91 to 92 contribute to the ATP site; these read DGE and RQ. Residues His-125 and Asp-162 each contribute to the Mg(2+) site. Residue Lys-185 is part of the active site. D-ribose 5-phosphate-binding positions include Arg-187, Asp-211, and 215–219; that span reads STGGT.

This sequence belongs to the ribose-phosphate pyrophosphokinase family. Class III (archaeal) subfamily. Requires Mg(2+) as cofactor.

The protein localises to the cytoplasm. The catalysed reaction is D-ribose 5-phosphate + ATP = 5-phospho-alpha-D-ribose 1-diphosphate + AMP + H(+). Its pathway is metabolic intermediate biosynthesis; 5-phospho-alpha-D-ribose 1-diphosphate biosynthesis; 5-phospho-alpha-D-ribose 1-diphosphate from D-ribose 5-phosphate (route I): step 1/1. Functionally, involved in the biosynthesis of the central metabolite phospho-alpha-D-ribosyl-1-pyrophosphate (PRPP) via the transfer of pyrophosphoryl group from ATP to 1-hydroxyl of ribose-5-phosphate (Rib-5-P). This is Ribose-phosphate pyrophosphokinase from Methanothermobacter thermautotrophicus (strain ATCC 29096 / DSM 1053 / JCM 10044 / NBRC 100330 / Delta H) (Methanobacterium thermoautotrophicum).